Here is a 407-residue protein sequence, read N- to C-terminus: MKRTFIMVLDSFGIGASEDAAKFGDQGSDTLGHIAEVCARGEANVGRQGPLTLPNLSRLGLGKAAEESTGTFPQGLDRNADIIGAYAHASELSSGKDTPSGHWEIAGVPVLFDWGYFSDEHNSFPQELLDKLVERANLPGYLGNCHSSGTVILDQLGEEHMKTGKPIFYTSADSVFQIACHEETFGLDRLYELCEIAREELTEGGYNIGRVIARPFLGDKPGNFQRTGNRHDLAVEPPAPTVLKKLVDEKGGEVVSIGKIADIYANVGITKKVKATGIDALFDATLIEMEKAGDNTIVFTNFVDFDSSYGHRRDVAGYAAALELFDRRLPELLKLVKDEDIIIFTADHGCDPTWPGTDHTREHIPVLVYGPKVKPGSLGHRETFADIGQTVASYFGVSPMDYGKSMF.

Positions 10, 306, 311, 347, 348, and 359 each coordinate Mn(2+).

It belongs to the phosphopentomutase family. Requires Mn(2+) as cofactor.

It is found in the cytoplasm. The enzyme catalyses 2-deoxy-alpha-D-ribose 1-phosphate = 2-deoxy-D-ribose 5-phosphate. It catalyses the reaction alpha-D-ribose 1-phosphate = D-ribose 5-phosphate. The protein operates within carbohydrate degradation; 2-deoxy-D-ribose 1-phosphate degradation; D-glyceraldehyde 3-phosphate and acetaldehyde from 2-deoxy-alpha-D-ribose 1-phosphate: step 1/2. Isomerase that catalyzes the conversion of deoxy-ribose 1-phosphate (dRib-1-P) and ribose 1-phosphate (Rib-1-P) to deoxy-ribose 5-phosphate (dRib-5-P) and ribose 5-phosphate (Rib-5-P), respectively. This Serratia proteamaculans (strain 568) protein is Phosphopentomutase.